A 603-amino-acid chain; its full sequence is O-acetyltransferase OatA (603 aa).

Helical transmembrane passes span 17–37 (YLPG…IYHL), 45–65 (GFLG…SLLI), 87–107 (LIPA…IFKP), 148–168 (LWSL…ITFL), 177–197 (IIQT…VIHF), 211–231 (TRLQ…PFAL), 239–259 (IVVS…TLFF), 268–288 (IYNG…AIAV), 311–331 (YSLY…YVQG), 333–353 (IPVY…EISY), and 382–402 (VLVI…FDAL). Catalysis depends on residues Ser-453, Asp-575, and His-578.

The protein belongs to the acyltransferase 3 family. Monomer.

The protein localises to the cell membrane. Functionally, responsible for O-acetylation at the C(6)-hydroxyl group of N-acetylmuramyl residues, forming the corresponding N,6-O-diacetylmuramic acid of the peptidoglycan. O-acetylation of the peptidoglycan is the major determinant for lysozyme resistance. This chain is O-acetyltransferase OatA, found in Staphylococcus aureus (strain NCTC 8325 / PS 47).